The sequence spans 265 residues: Protein ENDO16 (265 aa).

The Cell attachment site signature appears at 25 to 27 (RGD). The disordered stretch occupies residues 71 to 265 (SPNAPSSQME…KEEEEEERSG (195 aa)). Residues 73–92 (NAPSSQMESEGSANPSTIGS) are compositionally biased toward polar residues. 4 tandem repeats follow at residues 75–94 (PSSQ…GSVS), 105–124 (ESER…ETEG), 128–147 (PHEQ…GAEQ), and 148–167 (PQEQ…DVDS). The segment at 75–257 (PSSQMESEGS…QSESEDPEKE (183 aa)) is 6 X approximate repeats. Acidic residues-rich tracts occupy residues 112–125 (EGSE…TEGA), 133–144 (ESEGGDQEESEG), 152–169 (MESE…DSGE), 194–212 (EVDE…EEPG), 222–243 (ESEG…EVIE), and 250–265 (ESED…ERSG). 2 tandem repeats follow at residues 217-236 (PHEQ…EEVE) and 238-257 (PQEV…PEKE). N-linked (GlcNAc...) asparagine glycosylation occurs at asparagine 228.

As to expression, first expressed in the vegetal plate and progressively the expression becomes restricted to a subset of endodermal cells as development proceeds.

Functionally, may be an adhesion molecule involved in gastrulation of the sea urchin embryo. This is Protein ENDO16 (ENDO16) from Strongylocentrotus purpuratus (Purple sea urchin).